Here is a 66-residue protein sequence, read N- to C-terminus: UPF0337 protein SAG0619 (66 aa).

A disordered region spans residues 1 to 22 (MSQEKLKSKLDQAKGGAKEGFG).

This sequence belongs to the UPF0337 (CsbD) family.

The polypeptide is UPF0337 protein SAG0619 (Streptococcus agalactiae serotype V (strain ATCC BAA-611 / 2603 V/R)).